The following is a 62-amino-acid chain: Delta-theraphotoxin-Cg1a 1 (62 aa).

The first 21 residues, 1–21 (MKTSILFVIFSLALLFALSAA), serve as a signal peptide directing secretion. The propeptide occupies 22–29 (TEIEETDR). 3 disulfides stabilise this stretch: Cys31–Cys46, Cys38–Cys51, and Cys45–Cys58.

It belongs to the neurotoxin 10 (Hwtx-1) family. 33 (Jztx-1) subfamily. Expressed by the venom gland.

It is found in the secreted. Inhibits voltage-gated sodium channels, preferentially subtype Nav1.5/SCN5A (in cardiac myocytes), but also Nav1.6/SCN8A and Nav1.7/SCN9A (TTX-sensitive Nav in rat DRG neurons) and invertebrate Nav (in insect neurons) as well as voltage-gated potassium channels of the subtype Kv2.1/KCNB1. Is suggested to bind to site 3 of the sodium channels and inhibit the inactivation of the activated channels, thereby blocking neuronal transmission. On potassium channels, inhibits activation of channels with an IC(50) of 8.05 uM through a voltage sensor-trapping mechanism. Increases muscle contraction in several assays (mouse phrenic nerve-diaphragm, toad heart, rat vas deferens) and is suggested to act both presynaptically and postsynaptically. Its function is as follows. Moderately inhibits voltage-gated sodium channels and weakly inhibits voltage-gated potassium channel. Inhibits the inactivation of rat Nav1.2/SCN2A (IC(50)=870 nM), rat Nav1.3/SCN3A (IC(50)=845 nM), rat Nav1.4/SCN4A (IC(50)=339 nM), human Nav1.5/SCN5A (IC(50)=335 nM) and human Nav1.7/SCN9A sodium channels (IC(50)=348 nM). The toxin delays the inactivation of sodium channels without affecting the activation and steady-state inactivation kinetics in the physiological range of voltages. Site-directed mutagenesis of the sodium channel indicates that the toxin interacts with site 3 located at the extracellular S3-S4 linker of domain IV. On potassium channels, it inhibits activation of channels with an IC(50) of 8.05 uM through a voltage sensor-trapping mechanism. It increases muscle contraction in several assays (mouse phrenic nerve-diaphragm, toad heart, rat vas deferens) and is suggested to act both presynaptically and postsynaptically. This chain is Delta-theraphotoxin-Cg1a 1, found in Chilobrachys guangxiensis (Chinese earth tiger tarantula).